We begin with the raw amino-acid sequence, 221 residues long: SIN3-HDAC complex-associated factor (221 aa).

The segment covering 112–121 (QKEFKRHNSD) has biased composition (basic and acidic residues). Disordered stretches follow at residues 112 to 152 (QKEF…MASG) and 201 to 221 (AAAE…TQEW). A compositionally biased stretch (low complexity) spans 124–135 (STTSSASPAQSP). The span at 136–152 (CYSNQSDDGSDTEMASG) shows a compositional bias: polar residues.

This sequence belongs to the SINHCAF family. As to quaternary structure, interacts with the Sin3/HDAC corepressor complex at least composed of BRMS1, BRMS1L, ING2, SAP30, SAP30L and HDAC1. Found in a complex composed of at least SINHCAF, SIN3A, HDAC1, SAP30, RBBP4, OGT and TET1. Interacts with SIN3A and OGT.

The protein localises to the nucleus. In terms of biological role, subunit of the Sin3 deacetylase complex (Sin3/HDAC), this subunit is important for the repression of genes encoding components of the TGF-beta signaling pathway. Core component of a SIN3A complex (composed of at least SINHCAF, SIN3A, HDAC1, SAP30, RBBP4, OGT and TET1) present in embryonic stem (ES) cells. Promotes the stability of SIN3A and its presence on chromatin and is essential for maintaining the potential of ES cells to proliferate rapidly, while ensuring a short G1-phase of the cell cycle, thereby preventing premature lineage priming. The polypeptide is SIN3-HDAC complex-associated factor (Homo sapiens (Human)).